Reading from the N-terminus, the 273-residue chain is GATA-type zinc finger protein 1 (273 aa).

Disordered regions lie at residues 99 to 143 (RDSK…ERVD) and 172 to 201 (SSRS…AGSE). Residues 208–232 (CASCRTQRTPLWRDAEDGTPLCNAC) form a GATA-type zinc finger.

It is found in the nucleus. In terms of biological role, transcriptional regulator that plays a key role in germ cell development. Determines the oogenic fate by activating key genes for the oogenic program and meiotic prophase entry. Acts downstream of bone morphogenetic protein (BMP) by regulating expression of genes required for the oogenic programs, which are repressed by Polycomb activities in sexually uncommitted germ cells. Regulates expression of STRA8, a central downstream effector for the meiotic program. Acts independently of retinoic acid (RA). In males, not required for germ-cell sex determination, but required to allow the spermatogonia to efficiently accomplish the meiotic prophase. The sequence is that of GATA-type zinc finger protein 1 from Homo sapiens (Human).